Consider the following 237-residue polypeptide: 1-(5-phosphoribosyl)-5-[(5-phosphoribosylamino)methylideneamino] imidazole-4-carboxamide isomerase (237 aa).

D8 acts as the Proton acceptor in catalysis. D129 (proton donor) is an active-site residue.

The protein belongs to the HisA/HisF family.

Its subcellular location is the cytoplasm. It catalyses the reaction 1-(5-phospho-beta-D-ribosyl)-5-[(5-phospho-beta-D-ribosylamino)methylideneamino]imidazole-4-carboxamide = 5-[(5-phospho-1-deoxy-D-ribulos-1-ylimino)methylamino]-1-(5-phospho-beta-D-ribosyl)imidazole-4-carboxamide. Its pathway is amino-acid biosynthesis; L-histidine biosynthesis; L-histidine from 5-phospho-alpha-D-ribose 1-diphosphate: step 4/9. This is 1-(5-phosphoribosyl)-5-[(5-phosphoribosylamino)methylideneamino] imidazole-4-carboxamide isomerase from Clostridium botulinum (strain Alaska E43 / Type E3).